The following is a 162-amino-acid chain: Troponin C, skeletal muscle (162 aa).

An N-acetylalanine modification is found at A1. 4 EF-hand domains span residues 17-52 (EMIA…LGQT), 53-88 (PTKE…QMKE), 93-128 (KSEE…SGES), and 129-162 (ITDE…EGVQ). 19 residues coordinate Ca(2+): D30, D32, D36, E41, D66, D68, S70, T72, E77, D106, N108, D110, Y112, E117, D142, N144, D146, K148, and E153.

It belongs to the troponin C family.

In terms of biological role, troponin is the central regulatory protein of striated muscle contraction. Tn consists of three components: Tn-I which is the inhibitor of actomyosin ATPase, Tn-T which contains the binding site for tropomyosin and Tn-C. The binding of calcium to Tn-C abolishes the inhibitory action of Tn on actin filaments. The protein is Troponin C, skeletal muscle of Pelophylax lessonae (Pool frog).